We begin with the raw amino-acid sequence, 230 residues long: MAVPVLGGFPIFMVVRVLGFIIAALVLTWTVHYRGGLALSSDNKDHIFNVHPVMMVIGLILFNGEAMLAYKSVQGTKNLKKLVHLTLQLTAFILSLIGVWAALKFHIDKGIENFYSLHSWLGLACLFLFAFQWAAGFVTYWYPGGSRNSRASLMPWHVFLGISIYALALVTATTGILEKVTFLQVNQVITRYSTEAMLVNTMGVLILILGGFVILGVVTPVSGKDQVLTQ.

2 helical membrane-spanning segments follow: residues Val5 to Leu25 and Val50 to Tyr70. The region spanning Val14–Val218 is the Cytochrome b561 domain. Heme b is bound at residue His51. The L-ascorbate site is built by Lys77 and Lys81. A helical membrane pass occupies residues Leu82–Ala102. Residue His84 coordinates heme b. The monodehydro-L-ascorbate radical site is built by Phe105, His106, and Tyr115. His118 lines the heme b pocket. Residues Trp120–Tyr140 form a helical membrane-spanning segment. L-ascorbate contacts are provided by Tyr140, Arg150, and Ala151. Heme b is bound at residue His157. Residues His157–Leu177 form a helical membrane-spanning segment. The monodehydro-L-ascorbate radical site is built by Phe182 and Asn186. The chain crosses the membrane as a helical span at residues Leu198 to Val218.

Homodimer. Heme b serves as cofactor. In terms of tissue distribution, expressed in roots, seedlings, leaves and flowers. Expressed in the L1 layer of the shoot apex, in the epidermis of leaf primordia and young leaves and in vascular bundles. In the differentiation zone of the root, detected in the pericycle and in the epidermis, but not in the cortex. Strongly expressed in the cortical region of the root tip, in the meristematic tissue and in the epidermal cell layer of lateral roots, but not in the root caps. Highly expressed in unfertilized ovules. In mature embryos, expressed in the epidermis, cotyledon tips and root tips.

It localises to the membrane. The catalysed reaction is Fe(3+)(out) + L-ascorbate(in) = monodehydro-L-ascorbate radical(in) + Fe(2+)(out) + H(+). Two-heme-containing cytochrome. Catalyzes ascorbate-dependent transmembrane ferric-chelate reduction. In Arabidopsis thaliana (Mouse-ear cress), this protein is Transmembrane ascorbate ferrireductase 2 (CYB561B).